Consider the following 351-residue polypeptide: N6-Methyl-AMP deaminase (351 aa).

H23 and H25 together coordinate Zn(2+). Residues H25, N27, H73, 105 to 108, D147, and G180 contribute to the N(6)-methyl-AMP site; that span reads STPR. H207 contacts Zn(2+). N(6)-methyl-AMP-binding residues include E210, D292, and D293. The active-site Proton donor is E210. Residue D292 participates in Zn(2+) binding.

It belongs to the metallo-dependent hydrolases superfamily. Adenosine and AMP deaminases family. In terms of assembly, monomer. Requires Zn(2+) as cofactor.

It carries out the reaction N(6)-methyl-AMP + H2O + H(+) = IMP + methylamine. Its function is as follows. Catalyzes the hydrolysis of the free cytosolic methylated adenosine nucleotide N(6)-methyl-AMP (N6-mAMP) to produce inositol monophosphate (IMP) and methylamine. Is required for the catabolism of cytosolic N6-mAMP, which is derived from the degradation of mRNA containing N6-methylated adenine (m6A). The polypeptide is N6-Methyl-AMP deaminase (Bos taurus (Bovine)).